Consider the following 113-residue polypeptide: Large ribosomal subunit protein uL22 (113 aa).

This sequence belongs to the universal ribosomal protein uL22 family. Part of the 50S ribosomal subunit.

Functionally, this protein binds specifically to 23S rRNA; its binding is stimulated by other ribosomal proteins, e.g. L4, L17, and L20. It is important during the early stages of 50S assembly. It makes multiple contacts with different domains of the 23S rRNA in the assembled 50S subunit and ribosome. Its function is as follows. The globular domain of the protein is located near the polypeptide exit tunnel on the outside of the subunit, while an extended beta-hairpin is found that lines the wall of the exit tunnel in the center of the 70S ribosome. In Halalkalibacterium halodurans (strain ATCC BAA-125 / DSM 18197 / FERM 7344 / JCM 9153 / C-125) (Bacillus halodurans), this protein is Large ribosomal subunit protein uL22.